The sequence spans 457 residues: uncharacterized protein (457 aa).

Positions 5-63 (PVKKNDVIEVEIIDLTHEGLGVAKVDHYPLFIENALPGEKLEIKVLKTGKSFGYGKVLT) constitute a TRAM domain. S-adenosyl-L-methionine-binding residues include glutamine 287, tyrosine 316, glutamate 337, and aspartate 385. Cysteine 412 functions as the Nucleophile in the catalytic mechanism.

This sequence belongs to the class I-like SAM-binding methyltransferase superfamily. RNA M5U methyltransferase family.

This is an uncharacterized protein from Enterococcus faecalis (strain ATCC 700802 / V583).